The chain runs to 496 residues: Neuronal acetylcholine receptor subunit beta-4 (496 aa).

The signal sequence occupies residues 1–19 (MRSALPLVLFSLVALCGRG). Topologically, residues 20 to 236 (DCRVANAEEK…IIKRKPLFYT (217 aa)) are extracellular. N-linked (GlcNAc...) asparagine glycosylation is found at asparagine 36, asparagine 93, asparagine 138, and asparagine 166. A disulfide bond links cysteine 153 and cysteine 167. Residues 237–257 (INLIIPCVLITSLAILVFYLP) form a helical membrane-spanning segment. Over 258 to 265 (SDCGEKMT) the chain is Cytoplasmic. Position 262 (glutamate 262) interacts with Na(+). The helical transmembrane segment at 266 to 286 (LCISVLLALTVFLLLISKIVP) threads the bilayer. The Extracellular portion of the chain corresponds to 287 to 298 (PTSLNVPLIGKY). Residues 299–319 (LMFTMVLVTFSIVTSVCVLNV) traverse the membrane as a helical segment. The Cytoplasmic portion of the chain corresponds to 320–464 (HHRSPSTHTM…WKYVAMVVDR (145 aa)). A helical transmembrane segment spans residues 465–485 (LFLWVFVVVCVLGTVGLFLPP). Residues 486 to 496 (LFQTHTPSEEP) lie on the Extracellular side of the membrane.

It belongs to the ligand-gated ion channel (TC 1.A.9) family. Acetylcholine receptor (TC 1.A.9.1) subfamily. Beta-4/CHRNB4 sub-subfamily. In terms of assembly, neuronal AChR is composed of two different types of subunits: alpha and beta. CHRNB4/Beta-4 subunit can be combined to CHRNA2/alpha-2, CHRNA3/alpha-3 or CHRNA4/alpha-4, CHRNA5/alpha-5 and CHRNB3/beta-3 to give rise to functional receptors. Forms stoichiometries such as (CHRNA3)2:(CHRNB4)3 or (CHRNA3:CHRNB4)2:CHRNB3. Interacts with RIC3; which is required for proper folding and assembly. Interacts with LYPD6.

The protein localises to the synaptic cell membrane. Its subcellular location is the cell membrane. It catalyses the reaction Ca(2+)(in) = Ca(2+)(out). The enzyme catalyses K(+)(in) = K(+)(out). It carries out the reaction Na(+)(in) = Na(+)(out). Functionally, component of neuronal acetylcholine receptors (nAChRs) that function as pentameric, ligand-gated cation channels with high calcium permeability among other activities. nAChRs are excitatory neurotrasnmitter receptors formed by a collection of nAChR subunits known to mediate synaptic transmission in the nervous system and the neuromuscular junction. Each nAchR subunit confers differential attributes to channel properties, including activation, deactivation and desensitization kinetics, pH sensitivity, cation permeability, and binding to allosteric modulators. CHRNB4 forms heteropentameric neuronal acetylcholine receptors with CHRNA2, CHRNA3 and CHRNA4, as well as CHRNA5 and CHRNB3 as accesory subunits. CHRNA3:CHRNB4 being predominant in neurons of the autonomic ganglia, it is known as ganglionic nicotinic receptor. CHRNA3:CHRNB4 or CHRNA3:CHRNA5:CHRNB4 play also an important role in the habenulo-interpeduncular tract, modulating the mesolimbic dopamine system and affecting reward circuits and addiction. Hypothalamic CHRNA3:CHRNB4 nAChR activation by nicotine leads to activation of POMC neurons and a decrease in food intake. In Bos taurus (Bovine), this protein is Neuronal acetylcholine receptor subunit beta-4 (CHRNB4).